The primary structure comprises 433 residues: Adenylosuccinate synthetase (433 aa).

GTP-binding positions include 13–19 (GDEGKGK) and 41–43 (GHT). The active-site Proton acceptor is the D14. Positions 14 and 41 each coordinate Mg(2+). Residues 14–17 (DEGK), 39–42 (NAGH), T130, R144, Q225, T240, and R304 contribute to the IMP site. H42 serves as the catalytic Proton donor. A substrate-binding site is contributed by 300–306 (STTGRKR). Residues R306, 332 to 334 (KLD), and 414 to 416 (STG) contribute to the GTP site.

This sequence belongs to the adenylosuccinate synthetase family. As to quaternary structure, homodimer. It depends on Mg(2+) as a cofactor.

It localises to the cytoplasm. It catalyses the reaction IMP + L-aspartate + GTP = N(6)-(1,2-dicarboxyethyl)-AMP + GDP + phosphate + 2 H(+). It functions in the pathway purine metabolism; AMP biosynthesis via de novo pathway; AMP from IMP: step 1/2. Plays an important role in the de novo pathway of purine nucleotide biosynthesis. Catalyzes the first committed step in the biosynthesis of AMP from IMP. This Buchnera aphidicola subsp. Acyrthosiphon pisum (strain APS) (Acyrthosiphon pisum symbiotic bacterium) protein is Adenylosuccinate synthetase.